Consider the following 436-residue polypeptide: tRNA pseudouridine synthase Pus10 (436 aa).

Asp254 serves as the catalytic Nucleophile. Residues Tyr322 and Tyr394 each coordinate substrate.

Belongs to the pseudouridine synthase Pus10 family.

It carries out the reaction uridine(54) in tRNA = pseudouridine(54) in tRNA. The catalysed reaction is uridine(55) in tRNA = pseudouridine(55) in tRNA. Responsible for synthesis of pseudouridine from uracil-54 and uracil-55 in the psi GC loop of transfer RNAs. The sequence is that of tRNA pseudouridine synthase Pus10 from Methanopyrus kandleri (strain AV19 / DSM 6324 / JCM 9639 / NBRC 100938).